We begin with the raw amino-acid sequence, 123 residues long: Small ribosomal subunit protein uS12 (123 aa).

At Asp-89 the chain carries 3-methylthioaspartic acid. Positions 104–123 are disordered; that stretch reads TAGVQDRRQGRSKYGAKRPK. The span at 113-123 shows a compositional bias: basic residues; that stretch reads GRSKYGAKRPK.

It belongs to the universal ribosomal protein uS12 family. Part of the 30S ribosomal subunit. Contacts proteins S8 and S17. May interact with IF1 in the 30S initiation complex.

Its function is as follows. With S4 and S5 plays an important role in translational accuracy. Functionally, interacts with and stabilizes bases of the 16S rRNA that are involved in tRNA selection in the A site and with the mRNA backbone. Located at the interface of the 30S and 50S subunits, it traverses the body of the 30S subunit contacting proteins on the other side and probably holding the rRNA structure together. The combined cluster of proteins S8, S12 and S17 appears to hold together the shoulder and platform of the 30S subunit. The sequence is that of Small ribosomal subunit protein uS12 from Oleidesulfovibrio alaskensis (strain ATCC BAA-1058 / DSM 17464 / G20) (Desulfovibrio alaskensis).